The chain runs to 526 residues: UDP-N-acetylmuramoyl-L-alanyl-D-glutamate--2,6-diaminopimelate ligase (526 aa).

Residues leucine 48 and serine 50 each coordinate UDP-N-acetyl-alpha-D-muramoyl-L-alanyl-D-glutamate. Residue 136–142 participates in ATP binding; that stretch reads GTSGKTT. Residues 178-179, serine 205, and arginine 213 contribute to the UDP-N-acetyl-alpha-D-muramoyl-L-alanyl-D-glutamate site; that span reads TT. Lysine 245 carries the N6-carboxylysine modification. Meso-2,6-diaminopimelate-binding positions include arginine 408, 432 to 435, glycine 490, and glutamate 494; that span reads DNPR. Residues 432–435 carry the Meso-diaminopimelate recognition motif motif; it reads DNPR.

It belongs to the MurCDEF family. MurE subfamily. Mg(2+) serves as cofactor. In terms of processing, carboxylation is probably crucial for Mg(2+) binding and, consequently, for the gamma-phosphate positioning of ATP.

The protein localises to the cytoplasm. It carries out the reaction UDP-N-acetyl-alpha-D-muramoyl-L-alanyl-D-glutamate + meso-2,6-diaminopimelate + ATP = UDP-N-acetyl-alpha-D-muramoyl-L-alanyl-gamma-D-glutamyl-meso-2,6-diaminopimelate + ADP + phosphate + H(+). Its pathway is cell wall biogenesis; peptidoglycan biosynthesis. Functionally, catalyzes the addition of meso-diaminopimelic acid to the nucleotide precursor UDP-N-acetylmuramoyl-L-alanyl-D-glutamate (UMAG) in the biosynthesis of bacterial cell-wall peptidoglycan. This Corynebacterium efficiens (strain DSM 44549 / YS-314 / AJ 12310 / JCM 11189 / NBRC 100395) protein is UDP-N-acetylmuramoyl-L-alanyl-D-glutamate--2,6-diaminopimelate ligase.